A 330-amino-acid chain; its full sequence is Aspartate--ammonia ligase (330 aa).

It belongs to the class-II aminoacyl-tRNA synthetase family. AsnA subfamily.

The protein resides in the cytoplasm. It carries out the reaction L-aspartate + NH4(+) + ATP = L-asparagine + AMP + diphosphate + H(+). It functions in the pathway amino-acid biosynthesis; L-asparagine biosynthesis; L-asparagine from L-aspartate (ammonia route): step 1/1. The chain is Aspartate--ammonia ligase from Streptococcus pyogenes serotype M1.